We begin with the raw amino-acid sequence, 162 residues long: HTH-type transcriptional regulator IscR (162 aa).

Positions Arg-2 to Asn-131 constitute an HTH rrf2-type domain. The H-T-H motif DNA-binding region spans Leu-28–Lys-51. [2Fe-2S] cluster contacts are provided by Cys-92, Cys-98, and Cys-104. The segment at Arg-141–Ala-162 is disordered.

[2Fe-2S] cluster is required as a cofactor.

In terms of biological role, regulates the transcription of several operons and genes involved in the biogenesis of Fe-S clusters and Fe-S-containing proteins. In Cronobacter sakazakii (strain ATCC BAA-894) (Enterobacter sakazakii), this protein is HTH-type transcriptional regulator IscR.